Reading from the N-terminus, the 335-residue chain is MKLEFAPINIPLARRLQTTAVFQWVFSFLLLAQCCIGIFLSLVLARLWLILALYVLWLYLDWETPQAGGRRWEWVRNWTVWKYFKDYFPIRLVKTCDLDPQHNYIMGFHPHGVLVAGAFGNFCTNYTGFKELFPGLTPYLHILPFWFRCPFFREYAMCVGLVSATKKSVNHVLSKENGGNISIIVIGGAEESLDAHPGSLILHILKRKGFIKVAFKQGAHLVPVFSFGENELFQQVPNPKGSFLRCVQERLQKIMGFAMPLFHARGIFQYSFGLMPYRMPIHTVVGRPIPVKQTSHPTQEEIESLHQQYLSALRDLFEEHKERYGIPEHESLIFT.

Transmembrane regions (helical) follow at residues 24 to 44 and 47 to 67; these read WVFS…SLVL and LWLI…TPQA. Residues Asn-77, Asn-125, and Asn-180 are each glycosylated (N-linked (GlcNAc...) asparagine).

It belongs to the diacylglycerol acyltransferase family.

It localises to the endoplasmic reticulum membrane. It carries out the reaction a 2-acylglycerol + an acyl-CoA = a 1,2-diacylglycerol + CoA. The catalysed reaction is a 2-acylglycerol + an acyl-CoA = a 1,2-diacyl-sn-glycerol + CoA. The enzyme catalyses a 2-acylglycerol + an acyl-CoA = a 2,3-diacyl-sn-glycerol + CoA. It catalyses the reaction a 1-acylglycerol + an acyl-CoA = a 1,2-diacylglycerol + CoA. It carries out the reaction a 1-acylglycerol + an acyl-CoA = a 1,3-diacylglycerol + CoA. The catalysed reaction is a 1-acyl-sn-glycerol + an acyl-CoA = a 1,3-diacyl-sn-glycerol + CoA. The enzyme catalyses a 3-acyl-sn-glycerol + an acyl-CoA = a 1,3-diacyl-sn-glycerol + CoA. It functions in the pathway glycerolipid metabolism; triacylglycerol biosynthesis. Functionally, involved in glycerolipid synthesis and lipid metabolism. Catalyzes the formation of diacylglycerol, the precursor of triacylglycerol, by transferring the acyl chain of a fatty acyl-CoA to a monoacylglycerol, mainly at the sn-1 or sn-3 positions. It uses both sn-2-monoacylglycerol (2-acylglycerol) and sn-1-monoacylglycerol (1-acyl-sn-glycerol) equally well as substrates, and uses sn-3-monoacylglycerol (3-acyl-sn-glycerol) with lower efficiency. In Xenopus tropicalis (Western clawed frog), this protein is 2-acylglycerol O-acyltransferase 1 (mogat1).